A 47-amino-acid chain; its full sequence is Delta-actitoxin-Axm1e (47 aa).

3 disulfides stabilise this stretch: Cys4–Cys44, Cys6–Cys34, and Cys27–Cys45.

This sequence belongs to the sea anemone sodium channel inhibitory toxin family. Type I subfamily.

It localises to the secreted. The protein resides in the nematocyst. In terms of biological role, binds specifically to voltage-gated sodium channels (Nav), thereby delaying their inactivation. This toxin is active on a variety of voltage-gated sodium channels (Nav1.1/SCN1A, Nav1.2/SCN2A, Nav1.3/SCN3A, Nav1.4/SCN4A, Nav1.5/SCN5A and Nav1.6/SCN8A). The chain is Delta-actitoxin-Axm1e from Anthopleura xanthogrammica (Giant green sea anemone).